The chain runs to 356 residues: UDP-3-O-acylglucosamine N-acyltransferase (356 aa).

Catalysis depends on His242, which acts as the Proton acceptor.

The protein belongs to the transferase hexapeptide repeat family. LpxD subfamily. As to quaternary structure, homotrimer.

It catalyses the reaction a UDP-3-O-[(3R)-3-hydroxyacyl]-alpha-D-glucosamine + a (3R)-hydroxyacyl-[ACP] = a UDP-2-N,3-O-bis[(3R)-3-hydroxyacyl]-alpha-D-glucosamine + holo-[ACP] + H(+). Its pathway is bacterial outer membrane biogenesis; LPS lipid A biosynthesis. Its function is as follows. Catalyzes the N-acylation of UDP-3-O-acylglucosamine using 3-hydroxyacyl-ACP as the acyl donor. Is involved in the biosynthesis of lipid A, a phosphorylated glycolipid that anchors the lipopolysaccharide to the outer membrane of the cell. The polypeptide is UDP-3-O-acylglucosamine N-acyltransferase (Acinetobacter baumannii (strain ACICU)).